Here is a 230-residue protein sequence, read N- to C-terminus: Preflagellin peptidase (230 aa).

Met1 is a topological domain (cytoplasmic). Residues 2-18 (IEYIIGALGLIIASVQD) traverse the membrane as a helical segment. The Extracellular segment spans residues 19–23 (FRSRE). Residues 24–46 (IEDYIWIFLAVFGVLFAIYSSIT) form a helical membrane-spanning segment. Over 47–49 (LLD) the chain is Cytoplasmic. Residues 50–72 (YSILINSISGFVICFILGYMMFL) form a helical membrane-spanning segment. Residues 73 to 78 (SGIGGG) are Extracellular-facing. A helical membrane pass occupies residues 79 to 89 (DGKMLIGLGAL). At 90-110 (VPKFQMPIYTSLGTLLNLNYV) the chain is on the cytoplasmic side. Residues 111-139 (PTFPIMVFINGIFFMVFLPFVILFRNILN) traverse the membrane as a helical segment. The Extracellular portion of the chain corresponds to 140-204 (GARPKTGKEF…EEIWVTPQIP (65 aa)). Residues 205 to 216 (LIIPITLSYLVT) form a helical membrane-spanning segment. Residues 217-230 (PIIGDRILDFLIPF) are Cytoplasmic-facing.

It belongs to the peptidase A24 family. Archaeal preflagellin peptidase subfamily.

It is found in the cell membrane. The catalysed reaction is Cleaves the signal peptide of 3 to 12 amino acids from the N-terminal of preflagellin, usually at Arg-Gly-|- or Lys-Gly-|-, to release flagellin.. In terms of biological role, cleaves the N-terminal leader peptide from preflagellins. In Methanococcus maripaludis (strain C6 / ATCC BAA-1332), this protein is Preflagellin peptidase (flaK).